We begin with the raw amino-acid sequence, 286 residues long: MDDFSATHINYTLSIHLSGIFFAWHRHFVWLWERTLREECGYNGYQPYWDWALSANNISASPIFDGSPTSLSGNGDPINQEPFLQLEPTNITIPTGTGGGCVTNGPFANMTLNLPDLSMAGDEEFPSNAFDYKPHCFTRNLNSHMSSAFTSQADVDRLLNSPSITDLQANIDFSAWPELREARILGPHAAAHMSLGRTMDDFWTAPQDPSFMLHHAQVDRIWSLWQARGPESRRWALNGTSTINNRPTSPEVTLDTELVWGSLSESKTMREVMSTEAYHFCYEYGA.

Cu cation contacts are provided by histidine 16, histidine 25, and histidine 215.

The protein belongs to the tyrosinase family. Requires Cu(2+) as cofactor.

Its pathway is secondary metabolite biosynthesis. Oxidase; part of the gene cluster that mediates the biosynthesis of hancockiamides, an unusual new family of N-cinnamoylated piperazines. The NRPS hkm10 and the NmrA-like reductase hkm9 are proposed to convert two molecules of L-Phe to the intermediary piperazine called xenocockiamide A. Xenocockiamide A is then converted to hancockiamide D via a series of hydroxylations and O-methylations. The tyrosinase hkm6 may catalyze an aromatic hydroxylation, then the 2-oxoglutarate-dependent Fe(II) dioxygenase hkm4 and the FAD-dependent phenol hydroxylase hkm7 may catalyze consecutive hydroxylations to install 2 more hydroxy groups, and the methyltransferase hkm8 probably catalyzes two methylations using 2 molecules of S-adenosyl-L-methionine (SAM). The NRPS hkm11 activates and transfers trans-cinnamate supplied by the PAL hkm12 to hancockiamide D and produces hancockiamide A. NRPS Hkm11 has the flexibility to tolerate the bulky hancockiamide G as a substrate and the absence of the acetyl-transferase hkm3 opens up the opportunity for hkm11 to introduce a second N-cinnamoyl moiety. The cytochrome P450 monooxygenase hkm5 catalyzes the methylenedioxy bridge formation, converting hancockiamide A into hancockiamide G. Hkm5 can also convert hancockiamide B into hancockiamide C, and hancockiamide D into hancockiamide H. The N-acetyltransferase hkm3 finally transfers an acetyl group to 1-N of piperazine, converting hancockiamide A into hancockiamide B and hancockiamide G into hancockiamide C. This Aspergillus hancockii protein is Oxidase hkm6.